The chain runs to 534 residues: Lysophosphatidylcholine acyltransferase 1 (534 aa).

The interval 1-25 (MRLRGRGPRAAPSSSSGAGDARRLA) is disordered. Residues 1–57 (MRLRGRGPRAAPSSSSGAGDARRLAPPGRNPFVHELRLSALQKAQVAFMTLTLFPIR) lie on the Cytoplasmic side of the membrane. Low complexity predominate over residues 8 to 19 (PRAAPSSSSGAG). A helical; Signal-anchor for type II membrane protein transmembrane segment spans residues 58–78 (LLFAAFMMLLAWPFALLASLG). Residues 79–534 (PPDKEPEQPL…GRKNSCKKAD (456 aa)) lie on the Lumenal side of the membrane. The HXXXXD motif signature appears at 135-140 (HSSYFD). EF-hand domains lie at 379–414 (PVSDALEDMFSLFDESGGGEIDLREYVVALSVVCRP) and 451–486 (VSELTVTDLFQAIDQEDKGRITFDDFCGFAEMYPDY). Asp-392, Ser-394, Glu-398, and Glu-403 together coordinate Ca(2+). Positions 531 to 534 (KKAD) match the Di-lysine motif motif.

This sequence belongs to the 1-acyl-sn-glycerol-3-phosphate acyltransferase family. In terms of tissue distribution, predominantly expressed in lung where it is enriched in alveolar type II cells. Expressed at lower levels in spleen and brain. Also detected in erythroleukemic cells and reticulocytes. Weakly or not expressed in other tissues.

It localises to the endoplasmic reticulum membrane. It is found in the golgi apparatus membrane. The protein localises to the cell membrane. The protein resides in the lipid droplet. The enzyme catalyses a 1-acyl-sn-glycero-3-phosphocholine + an acyl-CoA = a 1,2-diacyl-sn-glycero-3-phosphocholine + CoA. It catalyses the reaction a 1-O-alkyl-sn-glycero-3-phosphocholine + acetyl-CoA = a 1-O-alkyl-2-acetyl-sn-glycero-3-phosphocholine + CoA. It carries out the reaction a 1-acyl-sn-glycero-3-phosphate + an acyl-CoA = a 1,2-diacyl-sn-glycero-3-phosphate + CoA. The catalysed reaction is a 1-O-(1Z-alkenyl)-sn-glycero-3-phosphocholine + an acyl-CoA = a 1-O-(1Z-alkenyl)-2-acyl-sn-glycero-3-phosphocholine + CoA. The enzyme catalyses 1-acyl-sn-glycero-3-phospho-(1'-sn-glycerol) + an acyl-CoA = a 1,2-diacyl-sn-glycero-3-phospho-(1'-sn-glycerol) + CoA. It catalyses the reaction 1-hexadecanoyl-sn-glycero-3-phosphocholine + hexadecanoyl-CoA = 1,2-dihexadecanoyl-sn-glycero-3-phosphocholine + CoA. It carries out the reaction 1-O-hexadecyl-sn-glycero-3-phosphocholine + hexadecanoyl-CoA = 1-O-hexadecyl-2-hexadecanoyl-sn-glycero-3-phosphocholine + CoA. The catalysed reaction is a 1-O-(1Z-alkenyl)-sn-glycero-3-phosphocholine + hexadecanoyl-CoA = 1-O-(1Z)-alkenyl-2-hexadecanoyl-sn-glycero-3-phosphocholine + CoA. The enzyme catalyses 1-hexadecanoyl-sn-glycero-3-phospho-(1'-sn-glycerol) + hexadecanoyl-CoA = 1,2-dihexadecanoyl-sn-glycero-3-phospho-(1'-sn-glycerol) + CoA. It catalyses the reaction 1-dodecanoyl-sn-glycero-3-phosphocholine + hexadecanoyl-CoA = 1-dodecanoyl-2-hexadecanoyl-sn-glycero-3-phosphocholine + CoA. It carries out the reaction 1-tetradecanoyl-sn-glycero-3-phosphocholine + hexadecanoyl-CoA = 1-tetradecanoyl-2-hexadecanoyl-sn-glycero-3-phosphocholine + CoA. The catalysed reaction is 1-O-octadecyl-sn-glycero-3-phosphocholine + hexadecanoyl-CoA = 1-O-octadecyl-2-hexadecanoyl-sn-glycero-3-phosphocholine + CoA. The enzyme catalyses 1-octadecanoyl-sn-glycero-3-phosphocholine + hexadecanoyl-CoA = 1-octadecanoyl-2-hexadecanoyl-sn-glycero-3-phosphocholine + CoA. It catalyses the reaction 1-(9Z-octadecenoyl)-sn-glycero-3-phosphocholine + hexadecanoyl-CoA = 1-(9Z-octadecenoyl)-2-hexadecanoyl-sn-glycero-3-phosphocholine + CoA. It carries out the reaction 1-eicosanoyl-sn-glycero-3-phosphocholine + hexadecanoyl-CoA = 1-eicosanoyl-2-hexadecanoyl-sn-glycero-3-phosphocholine + CoA. The catalysed reaction is hexanoyl-CoA + 1-hexadecanoyl-sn-glycero-3-phosphocholine = 1-hexadecanoyl-2-hexanoyl-sn-glycero-3-phosphocholine + CoA. The enzyme catalyses octanoyl-CoA + 1-hexadecanoyl-sn-glycero-3-phosphocholine = 1-hexadecanoyl-2-octanoyl-sn-glycero-3-phosphocholine + CoA. It catalyses the reaction decanoyl-CoA + 1-hexadecanoyl-sn-glycero-3-phosphocholine = 1-hexadecanoyl-2-decanoyl-sn-glycero-3-phosphocholine + CoA. It carries out the reaction dodecanoyl-CoA + 1-hexadecanoyl-sn-glycero-3-phosphocholine = 1-hexadecanoyl-2-dodecanoyl-sn-glycero-3-phosphocholine + CoA. The catalysed reaction is tetradecanoyl-CoA + 1-hexadecanoyl-sn-glycero-3-phosphocholine = 1-hexadecanoyl-2-tetradecanoyl-sn-glycero-3-phosphocholine + CoA. The enzyme catalyses 1-hexadecanoyl-sn-glycero-3-phosphocholine + (9Z)-octadecenoyl-CoA = 1-hexadecanoyl-2-(9Z-octadecenoyl)-sn-glycero-3-phosphocholine + CoA. It catalyses the reaction (9Z,12Z)-octadecadienoyl-CoA + 1-hexadecanoyl-sn-glycero-3-phosphocholine = 1-hexadecanoyl-2-(9Z,12Z-octadecadienoyl)-sn-glycero-3-phosphocholine + CoA. It carries out the reaction (4Z,7Z,10Z,13Z,16Z,19Z)-docosahexaenoyl-CoA + 1-hexadecanoyl-sn-glycero-3-phosphocholine = 1-hexadecanoyl-2-(4Z,7Z,10Z,13Z,16Z,19Z-docosahexaenoyl)-sn-glycero-3-phosphocholine + CoA. The catalysed reaction is 1-hexadecanoyl-sn-glycero-3-phosphocholine + acetyl-CoA = 1-hexadecanoyl-2-acetyl-sn-glycero-3-phosphocholine + CoA. The enzyme catalyses eicosanoyl-CoA + 1-hexadecanoyl-sn-glycero-3-phosphocholine = 1-hexadecanoyl-2-eicosanoyl-sn-glycero-3-phosphocholine + CoA. It catalyses the reaction 1-O-hexadecyl-sn-glycero-3-phosphocholine + acetyl-CoA = 1-O-hexadecyl-2-acetyl-sn-glycero-3-phosphocholine + CoA. It carries out the reaction a 1-acyl-sn-glycero-3-phosphocholine + hexadecanoyl-CoA = 1-acyl-2-hexadecanoyl-sn-glycero-3-phosphocholine + CoA. The catalysed reaction is a 1-acyl-sn-glycero-3-phosphate + hexadecanoyl-CoA = 1-acyl-2-hexadecanoyl-sn-glycero-3-phosphate + CoA. The enzyme catalyses 1-acyl-sn-glycero-3-phospho-(1'-sn-glycerol) + hexadecanoyl-CoA = 1-acyl-2-hexadecanoyl-sn-glycero-3-phospho-(1'-sn-glycerol) + CoA. It functions in the pathway lipid metabolism; phospholipid metabolism. With respect to regulation, not activated by inflammatory stimulation. Inhibited by Cu(2+), Fe(2+), Ca(2+) and Mg(2+). Activity is not affected by Co(2+) or Mn(2+). Functionally, exhibits both acyltransferase and acetyltransferase activities. Activity is calcium-independent. Catalyzes the conversion of lysophosphatidylcholine (1-acyl-sn-glycero-3-phosphocholine or LPC) into phosphatidylcholine (1,2-diacyl-sn-glycero-3-phosphocholine or PC). Catalyzes the conversion 1-acyl-sn-glycerol-3-phosphate (lysophosphatidic acid or LPA) into 1,2-diacyl-sn-glycerol-3-phosphate (phosphatidic acid or PA) by incorporating an acyl moiety at the sn-2 position of the glycerol backbone. Displays a clear preference for saturated fatty acyl-CoAs, and 1-myristoyl or 1-palmitoyl LPC as acyl donors and acceptors, respectively. Involved in platelet-activating factor (PAF) biosynthesis by catalyzing the conversion of the PAF precursor, 1-O-alkyl-sn-glycero-3-phosphocholine (lyso-PAF) into 1-O-alkyl-2-acetyl-sn-glycero-3-phosphocholine (PAF). May synthesize phosphatidylcholine in pulmonary surfactant, thereby playing a pivotal role in respiratory physiology. Involved in the regulation of lipid droplet number and size. In Mus musculus (Mouse), this protein is Lysophosphatidylcholine acyltransferase 1 (Lpcat1).